Here is a 176-residue protein sequence, read N- to C-terminus: MSVAAARSSAVKVDWGKIVSSLGLTGATVSSLQAFRKRHEEAKKNAYELQNQPTTVDFAHYRKVLKNQKVVDEIEQHFKSFKPVTYDVSKQLKTIDAFEAKAIEDAKATEGKVNQEIGDLQKTLENIESARPFDQLSVDDVFKARPDLEKKIEEMVKKGRWSVPGYNEKFGSVVLM.

F-type ATP synthases have 2 components, the catalytic core F(1) and the membrane-embedded component F(0), linked together by a central stalk and a peripheral stalk. The central stalk, also called rotor shaft, is often seen as part of F(1). The peripheral stalk is seen as part of F(0). F(0) contains the membrane channel next to the rotor. F-type ATP synthases form dimers but each monomer functions independently in ATP generation. The dimer consists of 17 different polypeptides: ATP1 (subunit alpha, 3 molecules per monomer, part of F(1)), ATP2 (subunit beta, 3 copies per monomer, part of F(1)), ATP3 (subunit gamma, part of the central stalk), ATP4 (subunit b, part of the peripheral stalk), ATP5/OSCP (subunit 5/OSCP, part of the peripheral stalk), ATP6 (subunit a, part of the peripheral stalk), ATP7 (subunit d, part of the peripheral stalk), ATP8 (subunit 8, part of the peripheral stalk), OLI1 (subunit c, part of the rotor, 10 molecules per monomer), ATP14 (subunit h, part of the peripheral stalk), ATP15 (subunit epsilon, part of the central stalk), ATP16 (subunit delta, part of the central stalk), ATP17 (subunit f, part of the peripheral stalk), ATP18 (subunit i/j, part of the peripheral stalk), ATP19 (subunit k, dimer-specific, at interface between monomers), ATP20 (subunit g, at interface between monomers), TIM11 (subunit e, at interface between monomers).

The protein localises to the mitochondrion inner membrane. Functionally, mitochondrial membrane ATP synthase (F(1)F(0) ATP synthase or Complex V) produces ATP from ADP in the presence of a proton gradient across the membrane which is generated by electron transport complexes of the respiratory chain. F-type ATP synthases consist of two structural domains, F(1) - containing the extramembraneous catalytic core, and F(0) - containing the membrane proton channel, linked together by a central stalk and a peripheral stalk. During catalysis, ATP synthesis in the catalytic domain of F(1) is coupled via a rotary mechanism of the central stalk subunits to proton translocation. Part of the complex F(0) domain and the peripheral stalk, which acts as a stator to hold the catalytic alpha/ATP1(3)beta/ATP2(3) subcomplex and subunit a/ATP6 static relative to the rotary elements. The chain is ATP synthase subunit d, mitochondrial from Yarrowia lipolytica (strain CLIB 122 / E 150) (Yeast).